A 241-amino-acid chain; its full sequence is Class B acid phosphatase (241 aa).

Positions 1-27 (MFITTKKSLIALVLATAGLISSPVSFA) are cleaved as a signal peptide. Aspartate 72 serves as the catalytic Nucleophile. Mg(2+) is bound by residues aspartate 72 and aspartate 74. The active-site Proton donor is the aspartate 74. Substrate contacts are provided by residues 141 to 142 (TG) and lysine 181. Aspartate 196 provides a ligand contact to Mg(2+).

This sequence belongs to the class B bacterial acid phosphatase family. Homotetramer. The cofactor is Mg(2+).

It localises to the periplasm. It catalyses the reaction a phosphate monoester + H2O = an alcohol + phosphate. Dephosphorylates several organic phosphate monoesters. Also has a phosphotransferase activity catalyzing the transfer of low-energy phosphate groups from organic phosphate monoesters to free hydroxyl groups of various organic compounds. The sequence is that of Class B acid phosphatase from Edwardsiella ictaluri (strain 93-146).